We begin with the raw amino-acid sequence, 524 residues long: Phenylalanine--tRNA ligase alpha subunit (524 aa).

L-phenylalanine-binding residues include T362, Y441, and F467.

The protein belongs to the class-II aminoacyl-tRNA synthetase family. Phe-tRNA synthetase alpha subunit type 2 subfamily. Tetramer of two alpha and two beta subunits. Requires Mg(2+) as cofactor.

The protein resides in the cytoplasm. It carries out the reaction tRNA(Phe) + L-phenylalanine + ATP = L-phenylalanyl-tRNA(Phe) + AMP + diphosphate + H(+). The sequence is that of Phenylalanine--tRNA ligase alpha subunit from Methanopyrus kandleri (strain AV19 / DSM 6324 / JCM 9639 / NBRC 100938).